The primary structure comprises 508 residues: uncharacterized protein (508 aa).

It localises to the virion. This is an uncharacterized protein from Acanthamoeba polyphaga mimivirus (APMV).